The chain runs to 504 residues: Putative pentatricopeptide repeat-containing protein At3g28640 (504 aa).

PPR repeat units lie at residues 77–107 (NSFVYDTMIRICSRSSQPHLGLRYFLLMVKE), 115–149 (SYLTFHFLIVACLKACFFSVGKQIHCWVVKNGVFL), 151–181 (DSHVQTGVLRIYVEDKLLLDARKVFDEIPQP), 182–216 (DVVKWDVLMNGYVRCGLGSEGLEVFREMLVKGLEP), 217–251 (DEFSVTTALTACAQVGALAQGKWIHEFVKKKSWIE), 253–287 (DVFVGTALVDMYAKCGCIETAVEVFKKLTRRNVFS), 288–319 (WAALIGGYAAYGYAKKAMTCLERLEREDGIKP), 320–350 (DSVVLLGVLAACAHGGFLEEGRSMLENMEAR), and 356–390 (KHEHYSCIVDLMCRAGRLDDALNLIEKMPMKPLAS). Residues 391–470 (VWGALLNGCR…TPGWSVLEVD (80 aa)) form a type E motif region. The tract at residues 471–501 (GNVTKFVSGDVSHPNLLQIHTVIHLLSVDAL) is type E(+) motif.

Belongs to the PPR family. PCMP-E subfamily.

The polypeptide is Putative pentatricopeptide repeat-containing protein At3g28640 (PCMP-E79) (Arabidopsis thaliana (Mouse-ear cress)).